Reading from the N-terminus, the 284-residue chain is Bifunctional protein FolD (284 aa).

NADP(+) contacts are provided by residues 165-167 (GAS), S190, and I231.

This sequence belongs to the tetrahydrofolate dehydrogenase/cyclohydrolase family. Homodimer.

It carries out the reaction (6R)-5,10-methylene-5,6,7,8-tetrahydrofolate + NADP(+) = (6R)-5,10-methenyltetrahydrofolate + NADPH. It catalyses the reaction (6R)-5,10-methenyltetrahydrofolate + H2O = (6R)-10-formyltetrahydrofolate + H(+). Its pathway is one-carbon metabolism; tetrahydrofolate interconversion. Its function is as follows. Catalyzes the oxidation of 5,10-methylenetetrahydrofolate to 5,10-methenyltetrahydrofolate and then the hydrolysis of 5,10-methenyltetrahydrofolate to 10-formyltetrahydrofolate. This is Bifunctional protein FolD from Bordetella avium (strain 197N).